Reading from the N-terminus, the 436-residue chain is GTPase Der (436 aa).

EngA-type G domains are found at residues 4 to 167 (PVIA…PKIE) and 176 to 351 (IRFS…ESHS). GTP-binding positions include 10 to 17 (GRPNVGKS), 57 to 61 (DTGGI), 119 to 122 (NKVD), 182 to 189 (GRPNVGKS), 229 to 233 (DTAGM), and 294 to 297 (NKWD). One can recognise a KH-like domain in the interval 352–436 (IRVQTNVLND…PIHIIARARD (85 aa)).

This sequence belongs to the TRAFAC class TrmE-Era-EngA-EngB-Septin-like GTPase superfamily. EngA (Der) GTPase family. In terms of assembly, associates with the 50S ribosomal subunit.

In terms of biological role, GTPase that plays an essential role in the late steps of ribosome biogenesis. This is GTPase Der from Bacillus cereus (strain G9842).